We begin with the raw amino-acid sequence, 503 residues long: Glycerol kinase (503 aa).

Residue Thr14 coordinates ADP. 3 residues coordinate ATP: Thr14, Thr15, and Ser16. Thr14 contributes to the sn-glycerol 3-phosphate binding site. Residue Arg18 participates in ADP binding. Sn-glycerol 3-phosphate contacts are provided by Arg84, Glu85, Tyr136, and Asp246. Glycerol is bound by residues Arg84, Glu85, Tyr136, Asp246, and Gln247. Thr268 and Gly311 together coordinate ADP. Thr268, Gly311, Gln315, and Gly412 together coordinate ATP. ADP-binding residues include Gly412 and Asn416.

It belongs to the FGGY kinase family.

It carries out the reaction glycerol + ATP = sn-glycerol 3-phosphate + ADP + H(+). Its pathway is polyol metabolism; glycerol degradation via glycerol kinase pathway; sn-glycerol 3-phosphate from glycerol: step 1/1. Inhibited by fructose 1,6-bisphosphate (FBP). Key enzyme in the regulation of glycerol uptake and metabolism. Catalyzes the phosphorylation of glycerol to yield sn-glycerol 3-phosphate. The chain is Glycerol kinase from Haemophilus influenzae (strain 86-028NP).